The sequence spans 343 residues: UPF0157 protein YqkA (343 aa).

The 137-residue stretch at 8–144 folds into the N-acetyltransferase domain; the sequence is KEATIAREIL…VKAAQGLLLS (137 aa). Residues 135 to 343 form a UPF0157 region; sequence VKAAQGLLLS…ENDENGGFTL (209 aa).

The protein in the C-terminal section; belongs to the UPF0157 (GrpB) family.

This Bacillus subtilis (strain 168) protein is UPF0157 protein YqkA (yqkA).